A 564-amino-acid polypeptide reads, in one-letter code: E3 ubiquitin-protein ligase RNF168 (564 aa).

The RING-type zinc finger occupies 16–55; that stretch reads CGICMEILVEPVTLPCNHTLCNPCFQSTVEKANLCCPFCR. Phosphoserine is present on serine 70. The LR motif 1 signature appears at 110-128; that stretch reads LSKPGELRREYEEEISKVE. Position 134 is a phosphoserine (serine 134). The UMI motif signature appears at 143–151; sequence EEYIQRLLA. Disordered stretches follow at residues 149-179 and 193-291; these read LLAEEEEEEKRRTERRRSEMEEQLRGDEELA and NILA…QGPE. Positions 157–179 are enriched in basic and acidic residues; sequence EKRRTERRRSEMEEQLRGDEELA. The short motif at 168–191 is the MIU motif 1 element; sequence MEEQLRGDEELARRLSTSINSNYE. Serine 197 bears the Phosphoserine mark. A Glycyl lysine isopeptide (Lys-Gly) (interchain with G-Cter in SUMO2) cross-link involves residue lysine 210. Positions 242 to 259 are enriched in basic and acidic residues; that stretch reads KTEHGEDMCKSKETDSSD. Over residues 275 to 288 the composition is skewed to polar residues; it reads PTHSPQTCPETQGQ. A phosphothreonine mark is found at threonine 348 and threonine 361. Phosphoserine occurs at positions 413 and 414. The MIU motif 2 signature appears at 438–461; sequence RHKQEEQDRLLALQLQKEADKEKM. The segment at 455 to 564 is disordered; that stretch reads EADKEKMVPN…QKSILQMFQR (110 aa). The short motif at 465 to 476 is the LR motif 2 element; sequence RQKGSPDQYQLR. The segment covering 466-480 has biased composition (polar residues); that stretch reads QKGSPDQYQLRTSSP. At serine 469 the chain carries Phosphoserine. The segment covering 491 to 515 has biased composition (basic and acidic residues); that stretch reads NVKDRNSPKQTADRSKSQRSRKGEY. Polar residues-rich tracts occupy residues 519-531 and 555-564; these read FESTWKGSVNGTK and QKSILQMFQR. Lysine 524 is covalently cross-linked (Glycyl lysine isopeptide (Lys-Gly) (interchain with G-Cter in SUMO2)).

The protein belongs to the RNF168 family. In terms of assembly, monomer. Interacts with UBE2N/UBC13. Post-translationally, sumoylated with SUMO1 by PIAS4 in response to double-strand breaks (DSBs). Ubiquitinated.

Its subcellular location is the nucleus. It carries out the reaction S-ubiquitinyl-[E2 ubiquitin-conjugating enzyme]-L-cysteine + [acceptor protein]-L-lysine = [E2 ubiquitin-conjugating enzyme]-L-cysteine + N(6)-ubiquitinyl-[acceptor protein]-L-lysine.. The protein operates within protein modification; protein ubiquitination. Functionally, E3 ubiquitin-protein ligase required for accumulation of repair proteins to sites of DNA damage. Acts with UBE2N/UBC13 to amplify the RNF8-dependent histone ubiquitination. Recruited to sites of DNA damage at double-strand breaks (DSBs) by binding to ubiquitinated histone H2A and H2AX and amplifies the RNF8-dependent H2A ubiquitination, promoting the formation of 'Lys-63'-linked ubiquitin conjugates. This leads to concentrate ubiquitinated histones H2A and H2AX at DNA lesions to the threshold required for recruitment of TP53BP1 and BRCA1. Also recruited at DNA interstrand cross-links (ICLs) sites and promotes accumulation of 'Lys-63'-linked ubiquitination of histones H2A and H2AX, leading to recruitment of FAAP20 and Fanconi anemia (FA) complex, followed by interstrand cross-link repair. H2A ubiquitination also mediates the ATM-dependent transcriptional silencing at regions flanking DSBs in cis, a mechanism to avoid collision between transcription and repair intermediates. Also involved in class switch recombination in immune system, via its role in regulation of DSBs repair. Following DNA damage, promotes the ubiquitination and degradation of JMJD2A/KDM4A in collaboration with RNF8, leading to unmask H4K20me2 mark and promote the recruitment of TP53BP1 at DNA damage sites. Not able to initiate 'Lys-63'-linked ubiquitination in vitro; possibly due to partial occlusion of the UBE2N/UBC13-binding region. Catalyzes monoubiquitination of 'Lys-13' and 'Lys-15' of nucleosomal histone H2A (H2AK13Ub and H2AK15Ub, respectively). The polypeptide is E3 ubiquitin-protein ligase RNF168 (Rattus norvegicus (Rat)).